We begin with the raw amino-acid sequence, 777 residues long: DnaJ homolog subfamily C member 16 (777 aa).

The signal sequence occupies residues 1–23 (MELGRAGPAGLLLLLLLLLAAQA). Over 24–531 (APERDPYRVL…DSLFHSNWRE (508 aa)) the chain is Cytoplasmic. Positions 28–92 (DPYRVLGVGR…EKRANFDRYG (65 aa)) constitute a J domain. Residues 117–243 (FDESFFHFPF…LRQFVENLLP (127 aa)) form the Thioredoxin domain. The helical; Anchor for type IV membrane protein transmembrane segment at 532 to 552 (MMPLLSLLFSALFILFGTVIV) threads the bilayer. At 553–777 (QAFSDSSDTR…FYIPSWPALD (225 aa)) the chain is on the extracellular side. Residues 558–589 (SSDTRDSPASEKKDTTAKTEKNDTSFNKESNS) form a disordered region. Residues 559-580 (SDTRDSPASEKKDTTAKTEKND) show a composition bias toward basic and acidic residues. N-linked (GlcNAc...) asparagine glycosylation occurs at Asn627.

Its subcellular location is the endoplasmic reticulum membrane. In terms of biological role, plays an important role in regulating the size of autophagosomes during the formation process. The sequence is that of DnaJ homolog subfamily C member 16 (DNAJC16) from Gallus gallus (Chicken).